The following is a 399-amino-acid chain: Formate-dependent phosphoribosylglycinamide formyltransferase (399 aa).

Residues 22-23 (EL) and E82 contribute to the N(1)-(5-phospho-beta-D-ribosyl)glycinamide site. Residues R114, K155, 160–165 (SSGKGQ), 195–198 (EKMI), and E203 each bind ATP. The ATP-grasp domain maps to 119–308 (RLAAETLHLL…EFALHVRAFL (190 aa)). Residues E267 and E279 each contribute to the Mg(2+) site. N(1)-(5-phospho-beta-D-ribosyl)glycinamide contacts are provided by residues D286, K355, and 362-363 (RR).

It belongs to the PurK/PurT family. In terms of assembly, homodimer.

It catalyses the reaction N(1)-(5-phospho-beta-D-ribosyl)glycinamide + formate + ATP = N(2)-formyl-N(1)-(5-phospho-beta-D-ribosyl)glycinamide + ADP + phosphate + H(+). Its pathway is purine metabolism; IMP biosynthesis via de novo pathway; N(2)-formyl-N(1)-(5-phospho-D-ribosyl)glycinamide from N(1)-(5-phospho-D-ribosyl)glycinamide (formate route): step 1/1. Its function is as follows. Involved in the de novo purine biosynthesis. Catalyzes the transfer of formate to 5-phospho-ribosyl-glycinamide (GAR), producing 5-phospho-ribosyl-N-formylglycinamide (FGAR). Formate is provided by PurU via hydrolysis of 10-formyl-tetrahydrofolate. The protein is Formate-dependent phosphoribosylglycinamide formyltransferase of Proteus mirabilis (strain HI4320).